A 247-amino-acid polypeptide reads, in one-letter code: MSKLFWAMLSFITRLPVPRRWSQGLDFEHYSRGIITFPLIGLLLGAISGLVFMVLQAWCGVPLAALFSVLVLALMTGGFHLDGLADTCDGVFSARSRDRMLEIMRDSRLGTHGGLALIFVVLAKILVLSELALRGEPILASLAAACAVSRGTAALLMYRHRYAREEGLGNVFIGKIDGRQTCVTLGLAAIFAAVLLPGMHGVAAMVVTMVAIFILGQLLKRTLGGQTGDTLGAAIELGELVFLLALL.

5 helical membrane-spanning segments follow: residues 34–54 (IITFPLIGLLLGAISGLVFMV), 59–79 (CGVPLAALFSVLVLALMTGGF), 113–133 (GGLALIFVVLAKILVLSELAL), 138–158 (ILASLAAACAVSRGTAALLMY), and 194–214 (VLLPGMHGVAAMVVTMVAIFI).

The protein belongs to the CobS family. The cofactor is Mg(2+).

The protein localises to the cell inner membrane. It catalyses the reaction alpha-ribazole + adenosylcob(III)inamide-GDP = adenosylcob(III)alamin + GMP + H(+). The catalysed reaction is alpha-ribazole 5'-phosphate + adenosylcob(III)inamide-GDP = adenosylcob(III)alamin 5'-phosphate + GMP + H(+). The protein operates within cofactor biosynthesis; adenosylcobalamin biosynthesis; adenosylcobalamin from cob(II)yrinate a,c-diamide: step 7/7. Its function is as follows. Joins adenosylcobinamide-GDP and alpha-ribazole to generate adenosylcobalamin (Ado-cobalamin). Also synthesizes adenosylcobalamin 5'-phosphate from adenosylcobinamide-GDP and alpha-ribazole 5'-phosphate. This Escherichia coli (strain 55989 / EAEC) protein is Adenosylcobinamide-GDP ribazoletransferase.